Here is a 500-residue protein sequence, read N- to C-terminus: Oogenesin-3 (500 aa).

An LRR 1; degenerate repeat occupies 116–143; sequence RCKLRVLKWRDEQHDFCGIWPGSHEAED. The stretch at 198-222 is one LRR 2; degenerate repeat; sequence HLLCRKLVIETLTKDTVIEIFKIVN. One copy of the LRR 3; degenerate repeat lies at 223–248; that stretch reads ADCIQELELYSLCLEDLAFLNPYLRQ. An LRR 4; degenerate repeat occupies 249–285; it reads MDNLLELTLDHVTDSLSMGDSEMCEEEMITLVSQLPT. LRR repeat units lie at residues 286-311, 312-343, 344-367, 368-395, and 396-420; these read FPCLQKLCVNDVYFIYGNLNEILRCL, KKPLVSFCISNCELSQSDLDCLPYCLNIFELK, CLYLIDIPLNHLCLDPLGFLLESV, RHTLECLELKSCDMGEPQFNALLPALSQ, and CSHLTDVSFWENELSLLFLKQLLQH.

This sequence belongs to the PRAME family. Expressed in ovary, specifically in oocytes. Detected in follicles with two layers of granulosa cells, and are present in early as well as large antral follicles.

This Mus musculus (Mouse) protein is Oogenesin-3.